The sequence spans 333 residues: Anthranilate phosphoribosyltransferase (333 aa).

5-phospho-alpha-D-ribose 1-diphosphate-binding positions include G81, 84–85 (GD), T89, 91–94 (NIST), 109–117 (KHGNRSVSS), and A121. G81 is an anthranilate binding site. Position 93 (S93) interacts with Mg(2+). N112 lines the anthranilate pocket. Residue R167 participates in anthranilate binding. 2 residues coordinate Mg(2+): D225 and E226.

The protein belongs to the anthranilate phosphoribosyltransferase family. As to quaternary structure, homodimer. Mg(2+) is required as a cofactor.

The catalysed reaction is N-(5-phospho-beta-D-ribosyl)anthranilate + diphosphate = 5-phospho-alpha-D-ribose 1-diphosphate + anthranilate. The protein operates within amino-acid biosynthesis; L-tryptophan biosynthesis; L-tryptophan from chorismate: step 2/5. In terms of biological role, catalyzes the transfer of the phosphoribosyl group of 5-phosphorylribose-1-pyrophosphate (PRPP) to anthranilate to yield N-(5'-phosphoribosyl)-anthranilate (PRA). This Haemophilus influenzae (strain PittEE) protein is Anthranilate phosphoribosyltransferase.